Reading from the N-terminus, the 191-residue chain is Superoxide dismutase [Mn/Fe] (191 aa).

Positions 27, 74, 157, and 161 each coordinate Fe(3+). Mn(2+) contacts are provided by histidine 27, histidine 74, aspartate 157, and histidine 161.

This sequence belongs to the iron/manganese superoxide dismutase family. In terms of assembly, homodimer. The cofactor is Mn(2+). It depends on Fe(3+) as a cofactor.

It carries out the reaction 2 superoxide + 2 H(+) = H2O2 + O2. Inhibited by hydrogen peroxide. In terms of biological role, destroys superoxide anion radicals which are normally produced within the cells and which are toxic to biological systems. Catalyzes the dismutation of superoxide anion radicals into O2 and H2O2 by successive reduction and oxidation of the transition metal ion at the active site. The polypeptide is Superoxide dismutase [Mn/Fe] (sodB) (Porphyromonas gingivalis (strain ATCC BAA-308 / W83)).